The sequence spans 564 residues: Urease subunit alpha (564 aa).

The Urease domain occupies 126-564 (GGIDTHIHFI…LPMAQRYFLF (439 aa)). Ni(2+)-binding residues include H131, H133, and K214. Position 214 is an N6-carboxylysine (K214). H216 contributes to the substrate binding site. 2 residues coordinate Ni(2+): H243 and H269. The Proton donor role is filled by H317. Residue D357 participates in Ni(2+) binding.

This sequence belongs to the metallo-dependent hydrolases superfamily. Urease alpha subunit family. As to quaternary structure, heterotrimer of UreA (gamma), UreB (beta) and UreC (alpha) subunits. Three heterotrimers associate to form the active enzyme. It depends on Ni cation as a cofactor. In terms of processing, carboxylation allows a single lysine to coordinate two nickel ions.

It localises to the cytoplasm. The catalysed reaction is urea + 2 H2O + H(+) = hydrogencarbonate + 2 NH4(+). It functions in the pathway nitrogen metabolism; urea degradation; CO(2) and NH(3) from urea (urease route): step 1/1. This chain is Urease subunit alpha, found in Burkholderia thailandensis (strain ATCC 700388 / DSM 13276 / CCUG 48851 / CIP 106301 / E264).